Consider the following 196-residue polypeptide: Small ribosomal subunit protein uS4c (196 aa).

The tract at residues 17-36 is disordered; that stretch reads ALPGLTRKTPKSGSNLKKKF. The S4 RNA-binding domain occupies 89–150; sequence MRLDNIVFRL…NQRSKRLVQN (62 aa).

It belongs to the universal ribosomal protein uS4 family. In terms of assembly, part of the 30S ribosomal subunit. Contacts protein S5. The interaction surface between S4 and S5 is involved in control of translational fidelity.

It localises to the plastid. It is found in the chloroplast. Functionally, one of the primary rRNA binding proteins, it binds directly to 16S rRNA where it nucleates assembly of the body of the 30S subunit. In terms of biological role, with S5 and S12 plays an important role in translational accuracy. This chain is Small ribosomal subunit protein uS4c (rps4), found in Tragus racemosus (Carrot grass).